A 283-amino-acid chain; its full sequence is 4-diphosphocytidyl-2-C-methyl-D-erythritol kinase (283 aa).

The active site involves K10. 99-109 lines the ATP pocket; the sequence is PMGGGLGGGSS. D141 is an active-site residue.

This sequence belongs to the GHMP kinase family. IspE subfamily. Homodimer.

The enzyme catalyses 4-CDP-2-C-methyl-D-erythritol + ATP = 4-CDP-2-C-methyl-D-erythritol 2-phosphate + ADP + H(+). Its pathway is isoprenoid biosynthesis; isopentenyl diphosphate biosynthesis via DXP pathway; isopentenyl diphosphate from 1-deoxy-D-xylulose 5-phosphate: step 3/6. Its function is as follows. Catalyzes the phosphorylation of the position 2 hydroxy group of 4-diphosphocytidyl-2C-methyl-D-erythritol. This chain is 4-diphosphocytidyl-2-C-methyl-D-erythritol kinase, found in Salmonella enteritidis PT4 (strain P125109).